The sequence spans 312 residues: MGKKRNKVSVIGAGFTGATTAFLTAQKELADVVLVDIPQLENPTKGKALDMLEASPVQGFDANITGTANYEDTAGSDIVVITAGIARKPGMSRDDLVATNEKIMRSVTKEVVKYSPDCIIIVLTNPVDAMTYAVYKESGFPKERVIGQSGILDTARFRTFVAQELNLSVKDITGFVLGGHGDDMVPLVRYSYAGGIPLETLLPKDRIDAIVERTRKGGGEIVNLLGNGSAYYAPAASLTEMVEAILKDQRRVLPTIAYLEGEYGYEGIYLGVPTIIGGNGLEQIIELELTETEKSQLDKSVESVKNVMKVLS.

NAD(+) is bound by residues 12-17 and Asp-36; that span reads GAGFTG. Substrate is bound by residues Arg-87 and Arg-93. NAD(+)-binding positions include Asn-100 and 123–125; that span reads LTN. Asn-125 serves as a coordination point for substrate. At Ser-149 the chain carries Phosphoserine. Arg-156 lines the substrate pocket. His-180 (proton acceptor) is an active-site residue.

The protein belongs to the LDH/MDH superfamily. MDH type 3 family.

It carries out the reaction (S)-malate + NAD(+) = oxaloacetate + NADH + H(+). Functionally, catalyzes the reversible oxidation of malate to oxaloacetate. In Bacillus licheniformis (strain ATCC 14580 / DSM 13 / JCM 2505 / CCUG 7422 / NBRC 12200 / NCIMB 9375 / NCTC 10341 / NRRL NRS-1264 / Gibson 46), this protein is Malate dehydrogenase.